Reading from the N-terminus, the 364-residue chain is Dihydroorotate dehydrogenase (quinone) (364 aa).

FMN is bound by residues 61–65 and Ser-85; that span reads AGFDK. Residue Lys-65 participates in substrate binding. 110–114 lines the substrate pocket; the sequence is NRMGF. FMN is bound by residues Asn-139 and Asn-170. A substrate-binding site is contributed by Asn-170. Residue Ser-173 is the Nucleophile of the active site. Asn-175 contacts substrate. FMN is bound by residues Lys-214 and Ser-242. Residue 243 to 244 coordinates substrate; sequence NT. Residues Gly-266, Gly-295, and 316–317 each bind FMN; that span reads YS.

The protein belongs to the dihydroorotate dehydrogenase family. Type 2 subfamily. Monomer. FMN is required as a cofactor.

The protein localises to the cell membrane. It carries out the reaction (S)-dihydroorotate + a quinone = orotate + a quinol. The protein operates within pyrimidine metabolism; UMP biosynthesis via de novo pathway; orotate from (S)-dihydroorotate (quinone route): step 1/1. Catalyzes the conversion of dihydroorotate to orotate with quinone as electron acceptor. The chain is Dihydroorotate dehydrogenase (quinone) from Bradyrhizobium sp. (strain BTAi1 / ATCC BAA-1182).